The following is a 204-amino-acid chain: High frequency lysogenization protein HflD homolog (204 aa).

It belongs to the HflD family.

It is found in the cytoplasm. The protein localises to the cell inner membrane. In Shewanella woodyi (strain ATCC 51908 / MS32), this protein is High frequency lysogenization protein HflD homolog.